A 260-amino-acid chain; its full sequence is Thaumatin-like protein 1 (260 aa).

The signal sequence occupies residues 1-32 (MIITVLHSHVSFYFIILSFLFFHALHLVGSDG). Intrachain disulfides connect cysteine 41–cysteine 255, cysteine 89–cysteine 100, cysteine 105–cysteine 112, cysteine 166–cysteine 245, cysteine 171–cysteine 228, cysteine 179–cysteine 191, cysteine 195–cysteine 204, and cysteine 205–cysteine 215.

Belongs to the thaumatin family. Expressed only in roots.

Its function is as follows. Involved in local responses of roots to colonization by non-pathogenic plant growth-promoting rhizobacteria (PGPR) fluorescent Pseudomonas spp., but seems to not being required for the establishment of subsequent induced systemic resistance (ISR). In Arabidopsis thaliana (Mouse-ear cress), this protein is Thaumatin-like protein 1.